The primary structure comprises 438 residues: MRLSRFFLPILKENPKEAEIVSHRLMLRAGMLRQEAAGIYAWLPLGHRVLKKIEQIVREEQNRAGAIELLMPTLQLADLWRESGRYDAYGPEMLRIADRHKRELLYGPTNEEMITEIFRAYIKSYKSLPLNLYHIQWKFRDEQRPRFGVMRGREFLMKDAYSFDVDEAGARKSYNKMFVAYLRTFARMGLKAIPMRAETGPIGGDLSHEFIVLAETGESGVYIDRDVLNLPVPDENVDYDGDLTPIIKQWTSVYAATEDVHEPARYESEVPEANRLNTRGIEVGQIFYFGTKYSDSMKANVTGPDGTDAPIHGGSYGVGVSRLLGAIIEACHDDNGIIWPEAVAPFRVTILNLKQGDAATDAACDQLYRELSAKGVDVLYDDTDQRAGAKFATADLIGIPWQIHVGPRGLAEGKVELKRRSDGSRENLALADVVARLT.

This sequence belongs to the class-II aminoacyl-tRNA synthetase family. ProS type 2 subfamily. As to quaternary structure, homodimer.

It is found in the cytoplasm. It catalyses the reaction tRNA(Pro) + L-proline + ATP = L-prolyl-tRNA(Pro) + AMP + diphosphate. Catalyzes the attachment of proline to tRNA(Pro) in a two-step reaction: proline is first activated by ATP to form Pro-AMP and then transferred to the acceptor end of tRNA(Pro). In Rhodopseudomonas palustris (strain TIE-1), this protein is Proline--tRNA ligase.